Reading from the N-terminus, the 519-residue chain is Maturase K (519 aa).

This sequence belongs to the intron maturase 2 family. MatK subfamily.

Its subcellular location is the plastid. It localises to the chloroplast. Its function is as follows. Usually encoded in the trnK tRNA gene intron. Probably assists in splicing its own and other chloroplast group II introns. The polypeptide is Maturase K (Cycas panzhihuaensis (Dukou cycad)).